A 224-amino-acid chain; its full sequence is Phosphoribosylformylglycinamidine synthase subunit PurQ (224 aa).

A Glutamine amidotransferase type-1 domain is found at arginine 4 to serine 224. Catalysis depends on cysteine 87, which acts as the Nucleophile. Active-site residues include histidine 195 and glutamate 197.

Part of the FGAM synthase complex composed of 1 PurL, 1 PurQ and 2 PurS subunits.

Its subcellular location is the cytoplasm. The enzyme catalyses N(2)-formyl-N(1)-(5-phospho-beta-D-ribosyl)glycinamide + L-glutamine + ATP + H2O = 2-formamido-N(1)-(5-O-phospho-beta-D-ribosyl)acetamidine + L-glutamate + ADP + phosphate + H(+). It carries out the reaction L-glutamine + H2O = L-glutamate + NH4(+). It participates in purine metabolism; IMP biosynthesis via de novo pathway; 5-amino-1-(5-phospho-D-ribosyl)imidazole from N(2)-formyl-N(1)-(5-phospho-D-ribosyl)glycinamide: step 1/2. Functionally, part of the phosphoribosylformylglycinamidine synthase complex involved in the purines biosynthetic pathway. Catalyzes the ATP-dependent conversion of formylglycinamide ribonucleotide (FGAR) and glutamine to yield formylglycinamidine ribonucleotide (FGAM) and glutamate. The FGAM synthase complex is composed of three subunits. PurQ produces an ammonia molecule by converting glutamine to glutamate. PurL transfers the ammonia molecule to FGAR to form FGAM in an ATP-dependent manner. PurS interacts with PurQ and PurL and is thought to assist in the transfer of the ammonia molecule from PurQ to PurL. In Mycobacterium leprae (strain TN), this protein is Phosphoribosylformylglycinamidine synthase subunit PurQ.